A 329-amino-acid chain; its full sequence is MTRMKILTEAELRGIVPLDREAVACVEDAFRALATKAVAMPPILRLDIPEHRGEVDVKTAYVPGLDGFAIKISPGFFDNPKIGLPSTNGMMVLLSSKTGLVQALLLDNGYLTDVRTAAAGAVAARRLSREDSSVAAVFGAGMQARLQLEALALVRPIREARIWARDAAKAEAAAIALGGKLGFAVKAETDPRAAITGADIIVTTTPSETPVLKAEWLEPGQHVTAMGSDAEHKNEIDPHAIARATYVADSLKQTRRLGELHHAIAAHLMSAEAEFPELGQVIAGLKPGRTRADEITIADLTGTGIQDTAIATLAFARANAADAGTTFES.

This sequence belongs to the ornithine cyclodeaminase/mu-crystallin family.

In Rhizobium meliloti (strain 1021) (Ensifer meliloti), this protein is Putative dehydrogenase RB0419.